An 801-amino-acid polypeptide reads, in one-letter code: Ent-copalyl diphosphate synthase, chloroplastic (801 aa).

A substrate-binding site is contributed by Lys-241. Mg(2+)-binding residues include Asp-373 and Asp-375. A DXDD motif motif is present at residues 373–376; that stretch reads DIDD. Lys-459 is a substrate binding site.

This sequence belongs to the terpene synthase family. Mg(2+) serves as cofactor.

Its subcellular location is the plastid. It is found in the chloroplast. The catalysed reaction is (2E,6E,10E)-geranylgeranyl diphosphate = ent-copalyl diphosphate. It participates in plant hormone biosynthesis; gibberellin biosynthesis. Catalyzes the conversion of geranylgeranyl diphosphate to the gibberellin precursor ent-copalyl diphosphate. The polypeptide is Ent-copalyl diphosphate synthase, chloroplastic (Pisum sativum (Garden pea)).